The chain runs to 71 residues: Small ribosomal subunit protein eS17 (71 aa).

It belongs to the eukaryotic ribosomal protein eS17 family.

The sequence is that of Small ribosomal subunit protein eS17 from Pyrobaculum islandicum (strain DSM 4184 / JCM 9189 / GEO3).